Reading from the N-terminus, the 262-residue chain is MSERESWHKEIDLFLVAMGYFTRIPMPKWVEADSDKLNKASRYFGLVGLLVGLLSAIVFWLTQNWLPAGVSVLLAMLVGVLLTGGFHEDGLADTFDGFGGGWTAEDKLRIMKDSRLGSYGALALMLALLLKWQLLVELALYDPVVAGSALIVAHTVSRMVSASIIFSEKYVRDDETSKSKPLSQHQGINELLILIASGVLVLLFLKGLAALSLLLVMIGLRRLIIVIFRRQIGGYTGDTLGAAQQIAEIVCYFVLLVVGNIL.

6 consecutive transmembrane segments (helical) span residues 43–63 (YFGL…WLTQ), 66–86 (LPAG…TGGF), 120–140 (GALA…ELAL), 146–166 (AGSA…SIIF), 191–211 (LLIL…LAAL), and 242–262 (AAQQ…GNIL).

It belongs to the CobS family. Mg(2+) is required as a cofactor.

Its subcellular location is the cell inner membrane. The catalysed reaction is alpha-ribazole + adenosylcob(III)inamide-GDP = adenosylcob(III)alamin + GMP + H(+). It catalyses the reaction alpha-ribazole 5'-phosphate + adenosylcob(III)inamide-GDP = adenosylcob(III)alamin 5'-phosphate + GMP + H(+). Its pathway is cofactor biosynthesis; adenosylcobalamin biosynthesis; adenosylcobalamin from cob(II)yrinate a,c-diamide: step 7/7. Its function is as follows. Joins adenosylcobinamide-GDP and alpha-ribazole to generate adenosylcobalamin (Ado-cobalamin). Also synthesizes adenosylcobalamin 5'-phosphate from adenosylcobinamide-GDP and alpha-ribazole 5'-phosphate. The sequence is that of Adenosylcobinamide-GDP ribazoletransferase from Shewanella baltica (strain OS155 / ATCC BAA-1091).